Consider the following 350-residue polypeptide: Geranylgeranyl diphosphate synthase (350 aa).

Isopentenyl diphosphate is bound by residues Lys70, Arg73, and His102. Asp109 and Asp113 together coordinate Mg(2+). The short motif at 109–113 (DDVMD) is the DDXXD motif element. Arg119 is a binding site for isopentenyl diphosphate. The DDXXD motif motif lies at 240–244 (DDLIG).

This sequence belongs to the FPP/GGPP synthase family. Mg(2+) is required as a cofactor.

It carries out the reaction isopentenyl diphosphate + (2E,6E)-farnesyl diphosphate = (2E,6E,10E)-geranylgeranyl diphosphate + diphosphate. The protein operates within isoprenoid biosynthesis; geranylgeranyl diphosphate biosynthesis; geranylgeranyl diphosphate from farnesyl diphosphate and isopentenyl diphosphate: step 1/1. Its function is as follows. Catalyzes the condensation of isopentenyl pyrophosphate (IPP) with (2E,6E)-farnesyl diphosphate (E,E-FPP) to yield geranylgeranyl diphosphate (GGPP). This Mycobacterium tuberculosis (strain ATCC 25618 / H37Rv) protein is Geranylgeranyl diphosphate synthase.